The primary structure comprises 456 residues: MICGSKKKAYLKSQNLKILGQGKLNGIVKINGAKNSALVLLASSLLTNEKIILENIPYLTDIEKMGNILKNLGVNLIDKNDQLEIDPTNISIKELPYELVNGLRASFFCIGALLTKFGEAQVPLPGGCNIGSRPIDEHINGLIALGADIIIEEGIVKAKIRGNKNKLHGTHIKLKCPSVGATETLIMAASLAEGRTTIENAAREPEIQDLCHMLNKMGAKIYDSGKETIIIDGVNKLGGCTHKVIPDRIEAGTFLIAAAATSSSITISPVIPHHLEAVTNKLQESGSKITIKGNSISIKSKEIKGVDIETAPFPGFPTDLQAPFTALMTIANGESKITETIFENRMNHIHLLNKMGARIKLNENVAYIKGVKTLNGMDLIGSDLRSSAALIIAGIIAEGTSNIYGLEHLDRGYENFELKLKKLGIKITREFNKSTFEENEFKIEPKSEDISNLRAA.

A phosphoenolpyruvate-binding site is contributed by lysine 34–asparagine 35. Arginine 104 provides a ligand contact to UDP-N-acetyl-alpha-D-glucosamine. Residue cysteine 128 is the Proton donor of the active site. Cysteine 128 bears the 2-(S-cysteinyl)pyruvic acid O-phosphothioketal mark. 2 residues coordinate UDP-N-acetyl-alpha-D-glucosamine: aspartate 319 and isoleucine 341.

The protein belongs to the EPSP synthase family. MurA subfamily.

It is found in the cytoplasm. The catalysed reaction is phosphoenolpyruvate + UDP-N-acetyl-alpha-D-glucosamine = UDP-N-acetyl-3-O-(1-carboxyvinyl)-alpha-D-glucosamine + phosphate. It participates in cell wall biogenesis; peptidoglycan biosynthesis. In terms of biological role, cell wall formation. Adds enolpyruvyl to UDP-N-acetylglucosamine. This chain is UDP-N-acetylglucosamine 1-carboxyvinyltransferase, found in Prochlorococcus marinus (strain MIT 9312).